The following is a 585-amino-acid chain: CTP synthase (585 aa).

Residues methionine 1–leucine 281 form an amidoligase domain region. Serine 23 is a binding site for CTP. UTP is bound at residue serine 23. Residues serine 24–leucine 29 and aspartate 81 contribute to the ATP site. Mg(2+) is bound by residues aspartate 81 and glutamate 155. CTP contacts are provided by residues aspartate 162 to glutamate 164, lysine 202 to glutamine 207, and lysine 238. Residues lysine 202–glutamine 207 and lysine 238 each bind UTP. Residues arginine 306–glycine 554 form the Glutamine amidotransferase type-1 domain. Residue glycine 369 coordinates L-glutamine. Cysteine 396 acts as the Nucleophile; for glutamine hydrolysis in catalysis. Residues leucine 397–glutamine 400, glutamate 419, and arginine 480 contribute to the L-glutamine site. Catalysis depends on residues histidine 527 and glutamate 529. The tract at residues isoleucine 564–glycine 585 is disordered. Residues histidine 576–glycine 585 show a composition bias toward basic and acidic residues.

The protein belongs to the CTP synthase family. Homotetramer.

It catalyses the reaction UTP + L-glutamine + ATP + H2O = CTP + L-glutamate + ADP + phosphate + 2 H(+). The enzyme catalyses L-glutamine + H2O = L-glutamate + NH4(+). The catalysed reaction is UTP + NH4(+) + ATP = CTP + ADP + phosphate + 2 H(+). It participates in pyrimidine metabolism; CTP biosynthesis via de novo pathway; CTP from UDP: step 2/2. Its activity is regulated as follows. Allosterically activated by GTP, when glutamine is the substrate; GTP has no effect on the reaction when ammonia is the substrate. The allosteric effector GTP functions by stabilizing the protein conformation that binds the tetrahedral intermediate(s) formed during glutamine hydrolysis. Inhibited by the product CTP, via allosteric rather than competitive inhibition. Functionally, catalyzes the ATP-dependent amination of UTP to CTP with either L-glutamine or ammonia as the source of nitrogen. Regulates intracellular CTP levels through interactions with the four ribonucleotide triphosphates. This chain is CTP synthase, found in Mycolicibacterium gilvum (strain PYR-GCK) (Mycobacterium gilvum (strain PYR-GCK)).